The following is a 165-amino-acid chain: Protein SprT (165 aa).

Residues 20–163 (ENLAQANLKL…RCVHCGEPLV (144 aa)) enclose the SprT-like domain. His-78 contributes to the Zn(2+) binding site. The active site involves Glu-79. His-82 lines the Zn(2+) pocket.

It belongs to the SprT family. It depends on Zn(2+) as a cofactor.

Its subcellular location is the cytoplasm. The chain is Protein SprT from Salmonella arizonae (strain ATCC BAA-731 / CDC346-86 / RSK2980).